The primary structure comprises 794 residues: Phosphoenolpyruvate synthase (794 aa).

Histidine 422 acts as the Tele-phosphohistidine intermediate in catalysis. Residues arginine 512, arginine 579, glutamate 681, glycine 702, serine 703, asparagine 704, and aspartate 705 each coordinate substrate. Glutamate 681 is a Mg(2+) binding site. Aspartate 705 serves as a coordination point for Mg(2+). Cysteine 752 functions as the Proton donor in the catalytic mechanism.

The protein belongs to the PEP-utilizing enzyme family. Mg(2+) is required as a cofactor.

The enzyme catalyses pyruvate + ATP + H2O = phosphoenolpyruvate + AMP + phosphate + 2 H(+). It functions in the pathway carbohydrate biosynthesis; gluconeogenesis. Its function is as follows. Catalyzes the phosphorylation of pyruvate to phosphoenolpyruvate. This chain is Phosphoenolpyruvate synthase (ppsA), found in Neisseria meningitidis serogroup B (strain ATCC BAA-335 / MC58).